Here is a 315-residue protein sequence, read N- to C-terminus: Polyprenyl transferase mpaA (315 aa).

8 helical membrane passes run 40–60, 84–103, 118–135, 143–163, 174–194, 224–244, 248–268, and 279–299; these read IEFI…LCGA, LASG…GQYF, IWSL…YPYL, VFVY…ITGW, GDII…CVYF, LFLA…ISTI, WLWV…IAQF, and IHWD…VEVG.

It belongs to the UbiA prenyltransferase family. It depends on Mg(2+) as a cofactor.

Its subcellular location is the golgi apparatus membrane. The enzyme catalyses 5,7-dihydroxy-4-methylphthalide + (2E,6E)-farnesyl diphosphate = 4-farnesyl-3,5-dihydroxy-6-methylphthalide + diphosphate. Its pathway is secondary metabolite biosynthesis; terpenoid biosynthesis. Functionally, polyprenyl transferase; part of the gene cluster that mediates the biosynthesis of mycophenolic acid (MPA), the first isolated antibiotic natural product in the world obtained from a culture of Penicillium brevicompactum in 1893. MpaA is a Golgi apparatus-associated enzyme that catalyzes the prenylation of 5,7-dihydroxy-4,6-dimethylphthalide (DHMP) to yield farnesyl-DHMP (FDHMP). The first step of the pathway is the synthesis of 5-methylorsellinic acid (5MOA) by the cytosolic polyketide synthase mpaC. 5MOA is then converted to the phthalide compound 5,7-dihydroxy-4,6-dimethylphthalide (DHMP) by the endoplasmic reticulum-bound cytochrome P450 monooxygenase mpaDE. MpaDE first catalyzes hydroxylation of 5-MOA to 4,6-dihydroxy-2-(hydroxymethyl)-3-methylbenzoic acid (DHMB). MpaDE then acts as a lactone synthase that catalyzes the ring closure to convert DHMB into DHMP. The next step is the prenylation of DHMP by the Golgi apparatus-associated prenyltransferase mpaA to yield farnesyl-DHMP (FDHMP). The ER-bound oxygenase mpaB then mediates the oxidative cleavage the C19-C20 double bond in FDHMP to yield FDHMP-3C via a mycophenolic aldehyde intermediate. The O-methyltransferase mpaG catalyzes the methylation of FDHMP-3C to yield MFDHMP-3C. After the cytosolic methylation of FDHMP-3C, MFDHMP-3C enters into peroxisomes probably via free diffusion due to its low molecular weight. Upon a peroxisomal CoA ligation reaction, catalyzed by a beta-oxidation component enzyme acyl-CoA ligase ACL891, MFDHMP-3C-CoA would then be restricted to peroxisomes for the following beta-oxidation pathway steps. The peroxisomal beta-oxidation machinery than converts MFDHMP-3C-CoA into MPA_CoA, via a beta-oxidation chain-shortening process. Finally mpaH acts as a peroxisomal acyl-CoA hydrolase with high substrate specificity toward MPA-CoA to release the final product MPA. This Penicillium brevicompactum protein is Polyprenyl transferase mpaA.